Consider the following 61-residue polypeptide: Small ribosomal subunit protein uS14B (61 aa).

Zn(2+) is bound by residues C24, C27, C40, and C43.

It belongs to the universal ribosomal protein uS14 family. Zinc-binding uS14 subfamily. As to quaternary structure, part of the 30S ribosomal subunit. Contacts proteins S3 and S10. It depends on Zn(2+) as a cofactor.

Functionally, binds 16S rRNA, required for the assembly of 30S particles and may also be responsible for determining the conformation of the 16S rRNA at the A site. The sequence is that of Small ribosomal subunit protein uS14B from Mycolicibacterium gilvum (strain PYR-GCK) (Mycobacterium gilvum (strain PYR-GCK)).